Here is a 657-residue protein sequence, read N- to C-terminus: Polycomb protein suz12-A (657 aa).

The interval 335–363 is disordered; sequence TAPVAKPLATRNSESSTVDSSKTSNIKPP. Over residues 347-358 the composition is skewed to low complexity; that stretch reads SESSTVDSSKTS. The C2H2-type zinc-finger motif lies at 413 to 436; sequence LHCPWCTLNCRKLYSLLKHLKLSH. The VEFS-box stretch occupies residues 528–604; that stretch reads RLYFHSDSCT…NQMNQACMSF (77 aa).

This sequence belongs to the VEFS (VRN2-EMF2-FIS2-SU(Z)12) family. As to quaternary structure, component of the prc2/eed-ezh2 complex.

It localises to the nucleus. Its function is as follows. Polycomb group (PcG) protein. Component of the prc2/eed-ezh2 complex, which methylates 'Lys-9' and 'Lys-27' of histone H3, leading to transcriptional repression of the affected target gene. In Danio rerio (Zebrafish), this protein is Polycomb protein suz12-A (suz12a).